Here is a 61-residue protein sequence, read N- to C-terminus: uncharacterized protein (61 aa).

A disordered region spans residues 1 to 40 (MRRGGEPQCDGREFRIASSPAREREDDNETAPPQTSAAQE). Basic and acidic residues predominate over residues 9–25 (CDGREFRIASSPARERE).

This is an uncharacterized protein from Caenorhabditis elegans.